The following is a 355-amino-acid chain: 3-isopropylmalate dehydrogenase (355 aa).

Positions 90, 100, 128, and 222 each coordinate substrate. Residues Asp-222, Asp-246, and Asp-250 each contribute to the Mg(2+) site. Residue 280–292 (GSAPDIAGKGIAN) coordinates NAD(+).

It belongs to the isocitrate and isopropylmalate dehydrogenases family. LeuB type 1 subfamily. In terms of assembly, homodimer. It depends on Mg(2+) as a cofactor. The cofactor is Mn(2+).

The protein localises to the cytoplasm. It carries out the reaction (2R,3S)-3-isopropylmalate + NAD(+) = 4-methyl-2-oxopentanoate + CO2 + NADH. It participates in amino-acid biosynthesis; L-leucine biosynthesis; L-leucine from 3-methyl-2-oxobutanoate: step 3/4. Catalyzes the oxidation of 3-carboxy-2-hydroxy-4-methylpentanoate (3-isopropylmalate) to 3-carboxy-4-methyl-2-oxopentanoate. The product decarboxylates to 4-methyl-2 oxopentanoate. The chain is 3-isopropylmalate dehydrogenase from Burkholderia mallei (strain ATCC 23344).